A 159-amino-acid chain; its full sequence is C-type lectin 1 (159 aa).

Residues 1–23 (MGRFIFISFGLLVVFFFLSGAKG) form the signal peptide. Intrachain disulfides connect cysteine 26–cysteine 37, cysteine 54–cysteine 155, cysteine 61–cysteine 157, and cysteine 130–cysteine 147. The C-type lectin domain occupies 33–156 (MYGLCYKIFD…CKVKNAFLCQ (124 aa)). Asparagine 118 is a glycosylation site (N-linked (GlcNAc...) asparagine). The Sugar-binding signature appears at 119 to 121 (LTD). Ca(2+) contacts are provided by aspartate 121, aspartate 127, and asparagine 143.

This sequence belongs to the true venom lectin family. As to quaternary structure, homodimer; disulfide-linked. Expressed by the venom gland.

The protein resides in the secreted. Functionally, lectin which recognizes specific carbohydrate structures and agglutinates a variety of animal cells by binding to cell-surface glycoproteins and glycolipids. May be a calcium-dependent lectin. This Bitis gabonica (Gaboon adder) protein is C-type lectin 1.